The primary structure comprises 75 residues: Putative defensin-like protein 271 (75 aa).

The first 23 residues, 1–23, serve as a signal peptide directing secretion; it reads MTSMKLHIVALCIIVSFLVNVQS. 4 disulfide bridges follow: cysteine 33-cysteine 72, cysteine 39-cysteine 61, cysteine 45-cysteine 70, and cysteine 49-cysteine 71.

It belongs to the DEFL family.

It is found in the secreted. The protein is Putative defensin-like protein 271 of Arabidopsis thaliana (Mouse-ear cress).